A 504-amino-acid chain; its full sequence is Protein phosphatase 1J (504 aa).

Disordered regions lie at residues 1 to 102 and 194 to 217; these read MLNR…RLPW and PLCL…SPQS. Low complexity predominate over residues 14-23; that stretch reads SSSGTSSQRS. Position 41 is a phosphothreonine (Thr41). Positions 59 to 73 are enriched in polar residues; the sequence is TAETPVSFSRPTFLQ. Ser65 and Ser75 each carry phosphoserine. Positions 103-496 constitute a PPM-type phosphatase domain; it reads STGYAEVINA…DDISVFVIPL (394 aa). Residues 197-217 are compositionally biased toward low complexity; the sequence is LPSTPGTPGVSSPSQLVSPQS.

The protein belongs to the PP2C family. Interacts with UBE2I/UBC9.

It carries out the reaction O-phospho-L-seryl-[protein] + H2O = L-seryl-[protein] + phosphate. It catalyses the reaction O-phospho-L-threonyl-[protein] + H2O = L-threonyl-[protein] + phosphate. In Rattus norvegicus (Rat), this protein is Protein phosphatase 1J (Ppm1j).